We begin with the raw amino-acid sequence, 457 residues long: Putative adhesion G protein-coupled receptor E4P (457 aa).

The N-terminal stretch at 1–14 is a signal peptide; that stretch reads MGSRFLLVLLSGAS. 6 cysteine pairs are disulfide-bonded: Cys15–Cys24, Cys18–Cys30, Cys32–Cys52, Cys58–Cys71, Cys65–Cys80, and Cys82–Cys103. Residues 15–53 enclose the EGF-like 1 domain; sequence CPPCPKYASCHNSTHCTCEDGFRARSGRTYFHDSSEKCE. Topologically, residues 16–191 are extracellular; that stretch reads PPCPKYASCH…LAPKEDPVLT (176 aa). Residue Asn26 is glycosylated (N-linked (GlcNAc...) asparagine). Residues 54 to 104 enclose the EGF-like 2; calcium-binding domain; sequence DINECETGLAKCKYKAYCRNKVGGYICSCLVKYTLFNFLAGIIDYDHPDCY. N-linked (GlcNAc...) asparagine glycans are attached at residues Asn106 and Asn162. One can recognise a GAIN-B domain in the interval 134–186; that stretch reads DKRTKHICVYWEGSEGGWSTEGCSHVHSNGSYTKCKCFHLSSFAVLVALAPKE. 2 disulfides stabilise this stretch: Cys141–Cys168 and Cys156–Cys170. Residues 141-186 form a GPS region; it reads CVYWEGSEGGWSTEGCSHVHSNGSYTKCKCFHLSSFAVLVALAPKE. The helical transmembrane segment at 192–212 threads the bilayer; that stretch reads VITQVGLTISLLCLFLAILTF. Over 213-223 the chain is Cytoplasmic; the sequence is LLCRPIQNTST. A helical membrane pass occupies residues 224-244; sequence SLHLELSLCLFLAHLLFLTGI. Asn245 carries an N-linked (GlcNAc...) asparagine glycan. The Extracellular portion of the chain corresponds to 245–250; that stretch reads NRTEPE. Residues 251–271 form a helical membrane-spanning segment; it reads VLCSIIAGLLHFLYLACFTWM. Over 272–299 the chain is Cytoplasmic; sequence LLEGLHLFLTVRNLKVANYTSTGRFKKR. Residues 300–320 traverse the membrane as a helical segment; it reads FMYPVGYGIPAVIIAVSAIVG. Topologically, residues 321 to 336 are extracellular; sequence PQNYGTFTCWLKLDKG. Residues 337 to 357 form a helical membrane-spanning segment; the sequence is FIWSFMGPVAVIILINLVFYF. The Cytoplasmic segment spans residues 358-384; the sequence is QVLWILRSKLSSLNKEVSTIQDTRVMT. A helical transmembrane segment spans residues 385 to 405; the sequence is FKAISQLFILGCSWGLGFFMV. Residues 406–413 lie on the Extracellular side of the membrane; that stretch reads EEVGKTIG. The helical transmembrane segment at 414 to 434 threads the bilayer; sequence SIIAYSFTIINTLQGVLLFVV. At 435–457 the chain is on the cytoplasmic side; that stretch reads HCLLNRQVRLIILSVISLVPKSN.

This sequence belongs to the G-protein coupled receptor 2 family. Adhesion G-protein coupled receptor (ADGR) subfamily. As to quaternary structure, forms a heterodimer, consisting of a large extracellular region (alpha subunit) non-covalently linked to a seven-transmembrane moiety (beta subunit). In terms of processing, glycosylated. Proteolytically cleaved into 2 subunits, an extracellular alpha subunit and a seven-transmembrane subunit.

It localises to the cell membrane. The protein localises to the secreted. May mediate the cellular interaction between myeloid cells and B-cells. This is Putative adhesion G protein-coupled receptor E4P from Homo sapiens (Human).